The following is a 174-amino-acid chain: Serine protease 2 (174 aa).

A disulfide bridge links Cys15 with Cys36. Residues His35, Asp65, and Ser147 each act as charge relay system in the active site. An intrachain disulfide couples Cys141 to Cys168.

The protein belongs to the peptidase S1 family.

The protein resides in the secreted. In terms of biological role, broad substrate specificity. The chain is Serine protease 2 from Streptomyces fradiae (Streptomyces roseoflavus).